A 509-amino-acid chain; its full sequence is Maturase K (509 aa).

Belongs to the intron maturase 2 family. MatK subfamily.

It localises to the plastid. The protein localises to the chloroplast. Usually encoded in the trnK tRNA gene intron. Probably assists in splicing its own and other chloroplast group II introns. The protein is Maturase K of Anthocercis viscosa (Sticky tailflower).